The following is a 524-amino-acid chain: DEAD-box ATP-dependent RNA helicase CshA (524 aa).

The Q motif signature appears at 1–29 (MKFNELNLSADLLAEIEKAGFVEASPIQE). The region spanning 32–202 (IPLALEGKDV…VQFMKAPEHV (171 aa)) is the Helicase ATP-binding domain. 45–52 (AQTGTGKT) contacts ATP. A DEAD box motif is present at residues 150 to 153 (DEAD). The Helicase C-terminal domain maps to 213 to 373 (LVDQYYIRVK…GLKPASVEES (161 aa)). Residues 440 to 524 (EKPLPFKPSG…GFVIRNKGDK (85 aa)) are disordered. The span at 463-498 (RRGDDRRERDRRGNGRRDEFKKGSRGNDRFDKEKRY) shows a compositional bias: basic and acidic residues.

Belongs to the DEAD box helicase family. CshA subfamily. As to quaternary structure, oligomerizes, may be a member of the RNA degradosome.

It is found in the cytoplasm. The catalysed reaction is ATP + H2O = ADP + phosphate + H(+). Functionally, DEAD-box RNA helicase possibly involved in RNA degradation. Unwinds dsRNA in both 5'- and 3'-directions, has RNA-dependent ATPase activity. This Streptococcus pneumoniae serotype 4 (strain ATCC BAA-334 / TIGR4) protein is DEAD-box ATP-dependent RNA helicase CshA.